Consider the following 84-residue polypeptide: Cell division topological specificity factor (84 aa).

It belongs to the MinE family.

Functionally, prevents the cell division inhibition by proteins MinC and MinD at internal division sites while permitting inhibition at polar sites. This ensures cell division at the proper site by restricting the formation of a division septum at the midpoint of the long axis of the cell. This chain is Cell division topological specificity factor, found in Burkholderia multivorans (strain ATCC 17616 / 249).